We begin with the raw amino-acid sequence, 456 residues long: Hydroxyproline dehydrogenase (456 aa).

2 positions are modified to N6-acetyllysine: Lys-310 and Lys-320.

Belongs to the proline oxidase family. It depends on FAD as a cofactor.

The enzyme catalyses trans-4-hydroxy-L-proline + a quinone = (3R,5S)-1-pyrroline-3-hydroxy-5-carboxylate + a quinol + H(+). It carries out the reaction L-proline + a quinone = (S)-1-pyrroline-5-carboxylate + a quinol + H(+). In terms of biological role, dehydrogenase that converts trans-4-L-hydroxyproline to delta-1-pyrroline-3-hydroxy-5-carboxylate (Hyp) using ubiquinone-10 as the terminal electron acceptor. Can also use proline as a substrate but with a very much lower efficiency. Does not react with other diastereomers of Hyp: trans-4-D-hydroxyproline and cis-4-L-hydroxyproline. Ubiquininone analogs such as menadione, duroquinone and ubiquinone-1 react more efficiently than oxygen as the terminal electron acceptor during catalysis. In Mus musculus (Mouse), this protein is Hydroxyproline dehydrogenase.